The following is a 99-amino-acid chain: DNA-binding protein Fis (99 aa).

The segment at residues 75–94 (QTRAANMLGINRGTLRKKLK) is a DNA-binding region (H-T-H motif).

Belongs to the transcriptional regulatory Fis family. As to quaternary structure, homodimer.

Functionally, activates ribosomal RNA transcription. Plays a direct role in upstream activation of rRNA promoters. In Haemophilus influenzae (strain PittEE), this protein is DNA-binding protein Fis.